The primary structure comprises 369 residues: 1-aminocyclopropane-1-carboxylate oxidase homolog 2 (369 aa).

Positions 217–318 (KGLRMLCHYF…VSVACFFHTH (102 aa)) constitute a Fe2OG dioxygenase domain. The Fe cation site is built by H241, D243, and H297.

Belongs to the iron/ascorbate-dependent oxidoreductase family. The cofactor is Fe cation.

The polypeptide is 1-aminocyclopropane-1-carboxylate oxidase homolog 2 (Arabidopsis thaliana (Mouse-ear cress)).